The chain runs to 436 residues: MLQQRVTVIGAGLAGSEAAWQLAKRGIQVDLYEMRPVRQTPAHHTDQFAELVCSNSLRANGLQNAVGVLKEEMRTLDSLILKAADTASVPAGGALAVDRHEFAGFITEKLKNHENVTVHNEELKEIPEGIVIVATGPLTSPDLSASLKAFTGEDYLYFYDAAAPILDGDTIDRDKVYLKSRYDKGEAAYLNCPMTEEEFDVFYEELIKAEVVPLKEFEKEIYFEGCMPFEVMAERGKKTLLFGPMKPVGLEDPKTGKRPYAVVQLRQDNSAGTLYNLVGFQTHLKWGEQKRIIRLIPGLENADIVRYGVMHRNTFINSPSLLKPTYQARTRDTLFFAGQMTGVEGYVESAASGLLAGINAAKMIAGEELVVLPRETMLGSMAHYITTADGKHFQPMNANFGLVPSLEDAPKKMKKQERYERYANRALETIQQYKDL.

10-15 (GAGLAG) is a binding site for FAD.

The protein belongs to the MnmG family. TrmFO subfamily. The cofactor is FAD.

The protein localises to the cytoplasm. It catalyses the reaction uridine(54) in tRNA + (6R)-5,10-methylene-5,6,7,8-tetrahydrofolate + NADH + H(+) = 5-methyluridine(54) in tRNA + (6S)-5,6,7,8-tetrahydrofolate + NAD(+). The catalysed reaction is uridine(54) in tRNA + (6R)-5,10-methylene-5,6,7,8-tetrahydrofolate + NADPH + H(+) = 5-methyluridine(54) in tRNA + (6S)-5,6,7,8-tetrahydrofolate + NADP(+). Functionally, catalyzes the folate-dependent formation of 5-methyl-uridine at position 54 (M-5-U54) in all tRNAs. The protein is Methylenetetrahydrofolate--tRNA-(uracil-5-)-methyltransferase TrmFO of Exiguobacterium sp. (strain ATCC BAA-1283 / AT1b).